Here is a 313-residue protein sequence, read N- to C-terminus: Probable cell division protein WhiA (313 aa).

Positions 275–308 (SLRELGELAQPPLSKSCVNHRLRKLEQIAEHILA) form a DNA-binding region, H-T-H motif.

This sequence belongs to the WhiA family.

Functionally, involved in cell division and chromosome segregation. The polypeptide is Probable cell division protein WhiA (Desulforudis audaxviator (strain MP104C)).